Reading from the N-terminus, the 221-residue chain is MEQEQKATQEQATYEEWTAPEPQEEKAEERGGNEPQEENAENLQQENTQAQQEALEEQPKAEQEQNDELAAANAKNCRTRSEDKRNGNRYLRLYADFENFRRRTRQEMEAAEKYRAQSLVSDLLPALDNFERALKIETENEQAKSILQGMEMVYRSVLDALKKEGVEAIEAVGKPFDPHLHQAVMQVEDSNYEPNTVVEEFQKGYKLKDRVIRPAMVKVSQ.

The interval 1–83 is disordered; sequence MEQEQKATQE…AKNCRTRSED (83 aa). Residues 23–32 are compositionally biased toward basic and acidic residues; the sequence is QEEKAEERGG. Residues 41 to 53 show a composition bias toward low complexity; it reads ENLQQENTQAQQE.

This sequence belongs to the GrpE family. In terms of assembly, homodimer.

The protein resides in the cytoplasm. Participates actively in the response to hyperosmotic and heat shock by preventing the aggregation of stress-denatured proteins, in association with DnaK and GrpE. It is the nucleotide exchange factor for DnaK and may function as a thermosensor. Unfolded proteins bind initially to DnaJ; upon interaction with the DnaJ-bound protein, DnaK hydrolyzes its bound ATP, resulting in the formation of a stable complex. GrpE releases ADP from DnaK; ATP binding to DnaK triggers the release of the substrate protein, thus completing the reaction cycle. Several rounds of ATP-dependent interactions between DnaJ, DnaK and GrpE are required for fully efficient folding. The sequence is that of Protein GrpE from Geobacillus stearothermophilus (Bacillus stearothermophilus).